Reading from the N-terminus, the 353-residue chain is MDQNKQKALAAALGQIEKQFGKGSIMRLGDSKTMDIEAISTGSLSLDVALGIGGLPCGRIVEIYGPESSGKTTLTLQVIAEAQKKGKVCAFIDAEHALDPIYAAKLGVNVDDLLISQPDTGEQALEICDMLVRSNAVDVIIVDSVAALTPKAEIEGEMGDSHVGLQARLMSQALRKLTANIKNANCLCIFINQIRMKIGVMFGSPETTTGGNALKFYASVRLDIRRIGAIKEGDEVVGNETRVKVVKNKVAPPFKQAEFQIFYGVGISKEGELVDLGVKHKLIDKAGAWYSYNGEKIGQGKANVMKLFTENKVMAAEVEARLRELLLSGDVPAEKPVVADADELEAESEQEFE.

ATP is bound at residue 65–72 (GPESSGKT).

It belongs to the RecA family.

Its subcellular location is the cytoplasm. Its function is as follows. Can catalyze the hydrolysis of ATP in the presence of single-stranded DNA, the ATP-dependent uptake of single-stranded DNA by duplex DNA, and the ATP-dependent hybridization of homologous single-stranded DNAs. It interacts with LexA causing its activation and leading to its autocatalytic cleavage. The protein is Protein RecA of Aeromonas salmonicida (strain A449).